The sequence spans 133 residues: Protein U17 (133 aa).

A helical membrane pass occupies residues 82-102; the sequence is FVSVLWCVILVFVVKIKLFFL.

Its subcellular location is the membrane. The protein is Protein U17 (U17/U16) of Homo sapiens (Human).